The sequence spans 178 residues: ATP synthase subunit delta (178 aa).

The protein belongs to the ATPase delta chain family. As to quaternary structure, F-type ATPases have 2 components, F(1) - the catalytic core - and F(0) - the membrane proton channel. F(1) has five subunits: alpha(3), beta(3), gamma(1), delta(1), epsilon(1). F(0) has three main subunits: a(1), b(2) and c(10-14). The alpha and beta chains form an alternating ring which encloses part of the gamma chain. F(1) is attached to F(0) by a central stalk formed by the gamma and epsilon chains, while a peripheral stalk is formed by the delta and b chains.

It is found in the cell inner membrane. In terms of biological role, f(1)F(0) ATP synthase produces ATP from ADP in the presence of a proton or sodium gradient. F-type ATPases consist of two structural domains, F(1) containing the extramembraneous catalytic core and F(0) containing the membrane proton channel, linked together by a central stalk and a peripheral stalk. During catalysis, ATP synthesis in the catalytic domain of F(1) is coupled via a rotary mechanism of the central stalk subunits to proton translocation. This protein is part of the stalk that links CF(0) to CF(1). It either transmits conformational changes from CF(0) to CF(1) or is implicated in proton conduction. This is ATP synthase subunit delta from Stutzerimonas stutzeri (strain A1501) (Pseudomonas stutzeri).